A 241-amino-acid chain; its full sequence is Orotidine 5'-phosphate decarboxylase (241 aa).

Residues aspartate 16, lysine 37, 64 to 73, threonine 128, arginine 190, glutamine 199, glycine 219, and arginine 220 contribute to the substrate site; that span reads DLKFHDIPTT. Lysine 66 (proton donor) is an active-site residue.

Belongs to the OMP decarboxylase family. Type 1 subfamily. As to quaternary structure, homodimer.

It carries out the reaction orotidine 5'-phosphate + H(+) = UMP + CO2. It participates in pyrimidine metabolism; UMP biosynthesis via de novo pathway; UMP from orotate: step 2/2. Catalyzes the decarboxylation of orotidine 5'-monophosphate (OMP) to uridine 5'-monophosphate (UMP). This chain is Orotidine 5'-phosphate decarboxylase, found in Prochlorococcus marinus (strain NATL2A).